Consider the following 215-residue polypeptide: SAGA complex/transcription factor TFIID complex subunit Taf10 (215 aa).

The tract at residues 1–77 (MSDINNNEPA…SRERHGSNYV (77 aa)) is disordered. Polar residues predominate over residues 23-42 (GNNSMSVDEQPETSSTNLPT). Positions 58 to 73 (NNEDSPKSDDSRERHG) are enriched in basic and acidic residues. Positions 58–203 (NNEDSPKSDD…VDDLSAALNE (146 aa)) constitute a Histone-fold domain.

It belongs to the TAF10 family. In terms of assembly, component of the 1.8 MDa SAGA (Spt-Ada-Gcn5 acetyltransferase) complex, which is composed of 19 subunits tra1, spt7, taf5, ngg1/ada3, sgf73, spt20, spt8, taf12, taf6, hfi1/ada1, ubp8, gcn5, ada2, spt3, sgf29, taf10, taf9, sgf11 and sus1. The SAGA complex is composed of 4 modules, namely the HAT (histone acetyltransferase) module (gcn5, ada2, ngg1/ada3 and sgf29), the DUB (deubiquitinating) module (ubp8, sgf11, sgf73 and sus1), the core or TAF (TBP-associated factor) module (taf5, taf6, taf9, taf10 and taf12), and the Tra1 or SPT (Suppressor of Ty) module (tra1, hfi1/ada1, spt3, spt7, spt8 and spt20). The Tra1/SPT module binds activators, the core module recruits TBP (TATA-binding protein), the HAT module contains the histone H3 acetyltransferase gcn5, and the DUB module comprises the histone H2B deubiquitinase ubp8. Component of the 1.2 MDa TFIID complex, which is composed of TATA-binding protein (TBP) and the 14 TBP-associated factors (TAFs). It comprises 1 copy of each taf1, taf2, taf3, taf7, taf8, taf11, taf13, 2 copies of each taf4, taf5, taf6, taf9, taf10, taf12, and 3 copies of taf14. In TFIID, taf10 heterodimerizes with taf3 and taf8.

The protein localises to the nucleus. Its function is as follows. Functions as a component of both the DNA-binding general transcription initiation factor complex TFIID and the transcription coactivator SAGA complex. Binding of TFIID to a promoter (with or without TATA element) is the initial step in pre-initiation complex (PIC) formation. TFIID plays a key role in the regulation of gene expression by RNA polymerase II through different activities such as transcription activator interaction, core promoter recognition and selectivity, TFIIA and TFIIB interaction, chromatin modification (histone acetylation by TAF1), facilitation of DNA opening and initiation of transcription. SAGA acts as a general cofactor required for essentially all RNA polymerase II transcription. At the promoters, SAGA is required for transcription pre-initiation complex (PIC) recruitment. It influences RNA polymerase II transcriptional activity through different activities such as TBP interaction (via core/TAF module) and promoter selectivity, interaction with transcription activators (via Tra1/SPT module), and chromatin modification through histone acetylation (via HAT module) and deubiquitination (via DUB module). SAGA preferentially acetylates histones H3 (to form H3K9ac, H3K14ac, H3K18ac and H3K23ac) and H2B and deubiquitinates histone H2B. SAGA interacts with DNA via upstream activating sequences (UASs). This is SAGA complex/transcription factor TFIID complex subunit Taf10 from Schizosaccharomyces pombe (strain 972 / ATCC 24843) (Fission yeast).